Reading from the N-terminus, the 259-residue chain is MERKIIRREKEREYEGRHNSVEDAEQGKNCKSTLMTLNVGGYLYITQKQTLTKYPDTFLEGIVNGKILCPFDADGHYFIDRDGLLFRHVLNFLRNGELLLPEGFRENQLLAQEAEFFQLKGLAEEVKSRWEKEQLTPRETTFLEITDNHDRSQGLRIFCNAPDFISKIKSRIVLVSKSRLDGFPEEFSVSSNIIQFKYFIKSENGTRLVLKEDNTFVCTLETLKFEAIMMALKCGFRLLTSLDCSKGSIVHSDALHFIK.

Residues threonine 33–glutamine 134 form the BTB domain.

The protein is BTB/POZ domain-containing protein KCTD4 (Kctd4) of Mus musculus (Mouse).